A 963-amino-acid chain; its full sequence is Bifunctional glutamine synthetase adenylyltransferase/adenylyl-removing enzyme (963 aa).

An adenylyl removase region spans residues 1 to 453; it reads MLTTLIPLSQ…IFNEIIGEEE (453 aa). Residues 461–963 form an adenylyl transferase region; the sequence is VNEKLAEWKD…VREMWQRLLA (503 aa).

Belongs to the GlnE family. Mg(2+) serves as cofactor.

The enzyme catalyses [glutamine synthetase]-O(4)-(5'-adenylyl)-L-tyrosine + phosphate = [glutamine synthetase]-L-tyrosine + ADP. It carries out the reaction [glutamine synthetase]-L-tyrosine + ATP = [glutamine synthetase]-O(4)-(5'-adenylyl)-L-tyrosine + diphosphate. Functionally, involved in the regulation of glutamine synthetase GlnA, a key enzyme in the process to assimilate ammonia. When cellular nitrogen levels are high, the C-terminal adenylyl transferase (AT) inactivates GlnA by covalent transfer of an adenylyl group from ATP to specific tyrosine residue of GlnA, thus reducing its activity. Conversely, when nitrogen levels are low, the N-terminal adenylyl removase (AR) activates GlnA by removing the adenylyl group by phosphorolysis, increasing its activity. The regulatory region of GlnE binds the signal transduction protein PII (GlnB) which indicates the nitrogen status of the cell. This chain is Bifunctional glutamine synthetase adenylyltransferase/adenylyl-removing enzyme, found in Mannheimia haemolytica (Pasteurella haemolytica).